A 543-amino-acid chain; its full sequence is ADIPOR-like receptor IZH3 (543 aa).

The Lumenal segment spans residues 1–259; the sequence is MMDSSSKSLT…NWYGWHNETS (259 aa). 4 N-linked (GlcNAc...) asparagine glycosylation sites follow: Asn45, Asn123, Asn153, and Asn256. A helical membrane pass occupies residues 260 to 280; it reads NIWSHLLGAIYIIYLAIYDFP. Topologically, residues 281–295 are cytoplasmic; sequence QSEVWRNSQVPPQAR. A helical membrane pass occupies residues 296–316; that stretch reads WIVFMFLAAALKCMLSSVFWH. Over 317-330 the chain is Lumenal; the sequence is TFNGTSFLKLRSKF. Asn319 is a glycosylation site (N-linked (GlcNAc...) asparagine). The chain crosses the membrane as a helical span at residues 331–353; it reads ACVDYSGITILITASILTTEFVT. Residues 354–357 are Cytoplasmic-facing; the sequence is MYSC. The chain crosses the membrane as a helical span at residues 358 to 378; the sequence is YWAMYTYMSISLALGVFGVFM. Residues 379-395 lie on the Lumenal side of the membrane; it reads NWSPRFDRPEARPLRIR. A helical transmembrane segment spans residues 396 to 416; sequence FFILLATMGVLSFLHLIFLTD. Residues 417–425 are Cytoplasmic-facing; it reads LHYAATLFS. A helical membrane pass occupies residues 426 to 446; that stretch reads PVTYKSVVWYLVGVVFYGSFI. At 447-505 the chain is on the lumenal side; the sequence is PERFRSDVQVDKTIPTNYELSTDLEIITKQREIHFREVPTAHSKCSSCPSHAKSFKSLW. Residues 506–526 traverse the membrane as a helical segment; that stretch reads WVDYFGCSHTFWHFFVVLGVI. Residues 527–543 are Cytoplasmic-facing; that stretch reads GHYRAILDMFAKRWILS.

It belongs to the ADIPOR family.

It is found in the endoplasmic reticulum membrane. ADIPOR-like receptor involved in zinc metabolism either by altering membrane sterol content or by directly altering cellular zinc levels. The chain is ADIPOR-like receptor IZH3 (IZH3) from Saccharomyces cerevisiae (strain ATCC 204508 / S288c) (Baker's yeast).